Consider the following 380-residue polypeptide: Succinate--CoA ligase [ADP-forming] subunit beta 2 (380 aa).

The region spanning 9-235 (KQIFSKHGIR…YTEADQMERI (227 aa)) is the ATP-grasp domain. ATP is bound by residues Lys-45, 52–54 (GRG), Glu-91, Ile-94, and Glu-99. Mg(2+) contacts are provided by Asn-191 and Asp-204. Substrate contacts are provided by residues Asn-255 and 312–314 (GIT).

This sequence belongs to the succinate/malate CoA ligase beta subunit family. Heterotetramer of two alpha and two beta subunits. Requires Mg(2+) as cofactor.

It carries out the reaction succinate + ATP + CoA = succinyl-CoA + ADP + phosphate. The catalysed reaction is GTP + succinate + CoA = succinyl-CoA + GDP + phosphate. Its pathway is carbohydrate metabolism; tricarboxylic acid cycle; succinate from succinyl-CoA (ligase route): step 1/1. Functionally, succinyl-CoA synthetase functions in the citric acid cycle (TCA), coupling the hydrolysis of succinyl-CoA to the synthesis of either ATP or GTP and thus represents the only step of substrate-level phosphorylation in the TCA. The beta subunit provides nucleotide specificity of the enzyme and binds the substrate succinate, while the binding sites for coenzyme A and phosphate are found in the alpha subunit. The protein is Succinate--CoA ligase [ADP-forming] subunit beta 2 of Archaeoglobus fulgidus (strain ATCC 49558 / DSM 4304 / JCM 9628 / NBRC 100126 / VC-16).